A 503-amino-acid polypeptide reads, in one-letter code: von Willebrand factor A domain-containing protein 1 (503 aa).

A signal peptide spans 1 to 21 (MEVRKALTCVFLTVFLCSGDA). A VWFA domain is found at 36–213 (DVLFLLDSSG…IIGEDLRNSI (178 aa)). 2 Fibronectin type-III domains span residues 218-324 (RAER…TVNP) and 331-423 (LLSS…VLPA).

Homodimer or homomultimer; disulfide-linked.

It localises to the secreted. The protein localises to the extracellular space. Its subcellular location is the extracellular matrix. The protein resides in the basement membrane. In terms of biological role, promotes matrix assembly. Involved in the organization of skeletal muscles and in the formation of neuromuscular junctions. In Danio rerio (Zebrafish), this protein is von Willebrand factor A domain-containing protein 1.